A 308-amino-acid polypeptide reads, in one-letter code: ATP synthase gamma chain (308 aa).

This sequence belongs to the ATPase gamma chain family. As to quaternary structure, F-type ATPases have 2 components, CF(1) - the catalytic core - and CF(0) - the membrane proton channel. CF(1) has five subunits: alpha(3), beta(3), gamma(1), delta(1), epsilon(1). CF(0) has three main subunits: a, b and c.

The protein localises to the cell membrane. Produces ATP from ADP in the presence of a proton gradient across the membrane. The gamma chain is believed to be important in regulating ATPase activity and the flow of protons through the CF(0) complex. The sequence is that of ATP synthase gamma chain from Lacticaseibacillus casei (strain BL23) (Lactobacillus casei).